Consider the following 441-residue polypeptide: N-acetyl-S-(2-succino)cysteine monooxygenase (441 aa).

The FMN site is built by Asp59, Thr96, His146, Tyr150, Ser220, and Ser221.

The protein belongs to the NtaA/SnaA/DszA monooxygenase family. Homodimer. FMN is required as a cofactor.

It carries out the reaction N-acetyl-S-(2-succino)-L-cysteine + NADH + O2 + H(+) = N-acetyl-L-cysteine + oxaloacetate + NAD(+) + H2O. It functions in the pathway amino-acid biosynthesis; L-cysteine biosynthesis. In terms of biological role, catalyzes the oxidative cleavage of the C-S bond of N-acetyl-S-(2-succino)cysteine, forming oxaloacetate and N-acetylcysteine (NAC). Is involved in a S-(2-succino)cysteine (2SC) degradation pathway that allows B.subtilis to grow on 2SC as a sole sulfur source, via its metabolization to cysteine. Shows almost no activity on S-succinylglutathione and 2SC. This chain is N-acetyl-S-(2-succino)cysteine monooxygenase, found in Bacillus subtilis (strain 168).